Here is a 256-residue protein sequence, read N- to C-terminus: Putative adhesin P1-like protein MPN_132 (256 aa).

Low complexity predominate over residues Ala-56 to Thr-72. 2 disordered regions span residues Ala-56 to His-115 and Phe-149 to Gly-235. Polar residues predominate over residues Lys-96–Pro-112. 2 stretches are compositionally biased toward low complexity: residues Thr-155–Val-179 and Ser-211–Asn-222.

The protein belongs to the adhesin P1 family.

This is Putative adhesin P1-like protein MPN_132 from Mycoplasma pneumoniae (strain ATCC 29342 / M129 / Subtype 1) (Mycoplasmoides pneumoniae).